A 431-amino-acid polypeptide reads, in one-letter code: Serine hydroxymethyltransferase (431 aa).

Residues L128 and G132–L134 contribute to the (6S)-5,6,7,8-tetrahydrofolate site. An N6-(pyridoxal phosphate)lysine modification is found at K237. E253 lines the (6S)-5,6,7,8-tetrahydrofolate pocket.

This sequence belongs to the SHMT family. As to quaternary structure, homodimer. It depends on pyridoxal 5'-phosphate as a cofactor.

It is found in the cytoplasm. The enzyme catalyses (6R)-5,10-methylene-5,6,7,8-tetrahydrofolate + glycine + H2O = (6S)-5,6,7,8-tetrahydrofolate + L-serine. It participates in one-carbon metabolism; tetrahydrofolate interconversion. Its pathway is amino-acid biosynthesis; glycine biosynthesis; glycine from L-serine: step 1/1. In terms of biological role, catalyzes the reversible interconversion of serine and glycine with tetrahydrofolate (THF) serving as the one-carbon carrier. This reaction serves as the major source of one-carbon groups required for the biosynthesis of purines, thymidylate, methionine, and other important biomolecules. Also exhibits THF-independent aldolase activity toward beta-hydroxyamino acids, producing glycine and aldehydes, via a retro-aldol mechanism. This chain is Serine hydroxymethyltransferase, found in Cereibacter sphaeroides (strain ATCC 17023 / DSM 158 / JCM 6121 / CCUG 31486 / LMG 2827 / NBRC 12203 / NCIMB 8253 / ATH 2.4.1.) (Rhodobacter sphaeroides).